A 389-amino-acid polypeptide reads, in one-letter code: Na(+)/H(+) antiporter NhaA (389 aa).

11 consecutive transmembrane segments (helical) span residues Ala14–Leu34, Leu59–Val79, Ser95–Phe115, Ala124–Leu144, Val154–Phe174, Ser177–Leu197, Leu213–Ile233, Phe261–Leu281, Ile290–Ile310, Ile328–Leu348, and Leu363–Val383.

The protein belongs to the NhaA Na(+)/H(+) (TC 2.A.33) antiporter family.

It is found in the cell inner membrane. It catalyses the reaction Na(+)(in) + 2 H(+)(out) = Na(+)(out) + 2 H(+)(in). Functionally, na(+)/H(+) antiporter that extrudes sodium in exchange for external protons. The protein is Na(+)/H(+) antiporter NhaA of Shewanella sp. (strain W3-18-1).